The sequence spans 226 residues: Phosphate propanoyltransferase (226 aa).

Residue 44–46 (VSN) participates in CoA binding. The Zn(2+) site is built by histidine 48 and histidine 50. The CoA site is built by methionine 72, lysine 90, and arginine 97. Residue arginine 103 participates in phosphate binding. Residue glutamate 109 coordinates Zn(2+). Phenylalanine 116 contacts CoA. Residues histidine 157, histidine 159, and histidine 204 each coordinate Zn(2+). Residue asparagine 211 participates in CoA binding.

The protein belongs to the PduL family. Full-length protein forms large oligomers. Homodimer, when purified in the absence of the encapsulation peptide (EP, residues 1-47). The EP may influence oligomerization. Zn(2+) serves as cofactor.

Its subcellular location is the bacterial microcompartment. It carries out the reaction propanoyl-CoA + phosphate = propanoyl phosphate + CoA. Its pathway is polyol metabolism; 1,2-propanediol degradation. Functionally, involved in 1,2-propanediol (1,2-PD) utilization within the bacterial microcompartment (BMC) dedicated to 1,2-PD degradation by catalyzing the conversion of propanoyl-CoA to propanoyl-phosphate. CoA is regenerated within the pdu BMC (for use by PduP) via this enzyme, although there must also be cofactor transport across the BMC. Directly targeted to the BMC. Phosphate is probably the first substrate to bind in the forward direction. CoA is probably the first substrate to bind in the reverse direction, and might bind to the enzyme as the BMC assembles, ensuring cofactor encapsulation. The protein is Phosphate propanoyltransferase of Rhodopseudomonas palustris (strain BisB18).